The following is a 301-amino-acid chain: Inosose dehydratase (301 aa).

The protein belongs to the IolE/MocC family. Requires glutathione as cofactor. The cofactor is Co(2+). Mn(2+) serves as cofactor.

It catalyses the reaction scyllo-inosose = 3D-3,5/4-trihydroxycyclohexane-1,2-dione + H2O. Catalyzes the dehydration of inosose (2-keto-myo-inositol, 2KMI or 2,4,6/3,5-pentahydroxycyclohexanone) to 3D-(3,5/4)-trihydroxycyclohexane-1,2-dione (D-2,3-diketo-4-deoxy-epi-inositol). The sequence is that of Inosose dehydratase from Salmonella typhimurium (strain LT2 / SGSC1412 / ATCC 700720).